We begin with the raw amino-acid sequence, 64 residues long: Beta-defensin 13 (64 aa).

Positions 1–22 (MRIFSLIVAGLVLLIQLYPAWG) are cleaved as a signal peptide. 3 disulfides stabilise this stretch: cysteine 30–cysteine 57, cysteine 37–cysteine 51, and cysteine 41–cysteine 58.

It belongs to the beta-defensin family. In terms of tissue distribution, expressed in testis and to a lesser extent in epididymis (caput, corpus and cauda). Also weakly expressed in kidneys.

It is found in the secreted. Its function is as follows. Has antibacterial activity. This chain is Beta-defensin 13 (Defb13), found in Mus musculus (Mouse).